An 857-amino-acid polypeptide reads, in one-letter code: Leucine--tRNA ligase (857 aa).

A 'HIGH' region motif is present at residues Pro42 to His52. The short motif at Lys615 to Ser619 is the 'KMSKS' region element. Lys618 lines the ATP pocket.

Belongs to the class-I aminoacyl-tRNA synthetase family.

It is found in the cytoplasm. It carries out the reaction tRNA(Leu) + L-leucine + ATP = L-leucyl-tRNA(Leu) + AMP + diphosphate. The sequence is that of Leucine--tRNA ligase from Thermosynechococcus vestitus (strain NIES-2133 / IAM M-273 / BP-1).